Consider the following 220-residue polypeptide: MSIRILLVEDDDHICNTVRAFLAEARYEVDACTDGNEAHTKFYENTYQLVILDIMLPGMNGHELLREFRAQNDTPILMMTALSDDENQIRAFDAEADDYVTKPFKMRILLKRVEALLRRSGALAKEFRVGRLTLLPEDFRVLCDGTELPLTRKEFEILLLLVQNKGRTLTHEIILSRIWGYDFDGDGSTVHTHIKNLRAKLPENIIKTIRGVGYRLEESL.

The 114-residue stretch at 4–117 folds into the Response regulatory domain; the sequence is RILLVEDDDH…ILLKRVEALL (114 aa). 4-aspartylphosphate is present on Asp53. The segment at residues 124-218 is a DNA-binding region (ompR/PhoB-type); it reads AKEFRVGRLT…IRGVGYRLEE (95 aa).

In terms of processing, may be phosphorylated by VanSB. May also be dephosphorylated by VanSB.

It localises to the cytoplasm. Functionally, member of the two-component regulatory system VanSB/VanRB. Activates the transcription of vanSB, vanYB and vanW in response to vancomycin which results in vancomycin resistance. The protein is Regulatory protein VanRB (vanRB) of Enterococcus faecalis (strain ATCC 700802 / V583).